Here is a 531-residue protein sequence, read N- to C-terminus: Importin subunit alpha-2 (531 aa).

The segment covering 1-10 has biased composition (polar residues); that stretch reads MTLTETSLSH. The segment at 1–88 is disordered; the sequence is MTLTETSLSH…ISHQQSSTRL (88 aa). The 63-residue stretch at 5 to 67 folds into the IBB domain; sequence ETSLSHNAEE…RNIVDVDEGG (63 aa). Basic and acidic residues-rich tracts occupy residues 11-20 and 29-50; these read NAEEGKDEGG and TKHEELRRRRTECSVEIRKQKG. A compositionally biased stretch (acidic residues) spans 62-75; sequence DVDEGGNSESELEE. ARM repeat units follow at residues 122-161, 164-203, 250-290, 293-331, 334-374, 377-416, and 420-459; these read NPPIDEVIHCGLLQALVQALSVENERVQYEAAWALTNIVS, TEQTIAAVEAGVTIPLIHLSVHQSAQISEQALWAVANIAG, KNPH…YLTD, DEQIELARESGVLPHVVAFFKEAENLVAPALRTLGNVAT, DSLT…NIIA, QKQIQAVLDANLLPVLINVLKSGDHKCQFEASWALSNLAQ, and NRQVVAMLEDNVVPALCQALLQTNTDMLNNTLETLYTLML. Residues 511–531 form a disordered region; that stretch reads DDAGEKESHENADPQDNKWSF. Over residues 515-531 the composition is skewed to basic and acidic residues; that stretch reads EKESHENADPQDNKWSF.

This sequence belongs to the importin alpha family. As to quaternary structure, forms a complex with an importin beta subunit. Interacts with akir-1. In terms of tissue distribution, germline tissues. Expressed exclusively in germ line cells from the early embryonic through adult stages.

The protein localises to the cytoplasm. Its subcellular location is the nucleus. It is found in the nucleus envelope. Functionally, nuclear transport receptor that mediates nuclear import of proteins, and which is involved in sister chromatid cohesion. Binds specifically and directly to substrates containing either a simple or bipartite nuclear localization signals (NLS) motif. Promotes docking of import substrates to the nuclear envelope. Together with akir-1 adapter, required for the import and load of cohesin complex proteins in meiotic nuclei. This Caenorhabditis elegans protein is Importin subunit alpha-2.